We begin with the raw amino-acid sequence, 254 residues long: Pectate lyase E (254 aa).

The first 17 residues, 1-17 (MYQPLLLLPLLLTSAFA), serve as a signal peptide directing secretion. The interval 227-254 (TNNNSKEPKKKSSGPSSYCKYSEPLSKC) is disordered. Asparagine 229 carries N-linked (GlcNAc...) asparagine glycosylation. A compositionally biased stretch (low complexity) spans 239–254 (SGPSSYCKYSEPLSKC).

Belongs to the polysaccharide lyase 3 family. Ca(2+) is required as a cofactor.

Its subcellular location is the secreted. It catalyses the reaction Eliminative cleavage of (1-&gt;4)-alpha-D-galacturonan to give oligosaccharides with 4-deoxy-alpha-D-galact-4-enuronosyl groups at their non-reducing ends.. In terms of biological role, pectinolytic enzyme consist of four classes of enzymes: pectin lyase, polygalacturonase, pectin methylesterase and rhamnogalacturonase. Among pectinolytic enzymes, pectin lyase is the most important in depolymerization of pectin, since it cleaves internal glycosidic bonds of highly methylated pectins. Favors pectate, the anion, over pectin, the methyl ester. The polypeptide is Pectate lyase E (plyE) (Emericella nidulans (strain FGSC A4 / ATCC 38163 / CBS 112.46 / NRRL 194 / M139) (Aspergillus nidulans)).